The chain runs to 349 residues: Transmembrane protein 255A (349 aa).

4 helical membrane passes run Ile30–Ala50, Val57–Ile77, Leu89–Val109, and Thr226–Phe246. The segment at Pro303–Ala329 is disordered. A compositionally biased stretch (low complexity) spans Ser316–Ala329.

It belongs to the TMEM255 family.

Its subcellular location is the membrane. The polypeptide is Transmembrane protein 255A (TMEM255A) (Homo sapiens (Human)).